A 421-amino-acid chain; its full sequence is MVSASRPEALAAPVTTVATLVPHNATEPASPGEGKEDAFSKLKQKFMNELHKIPLPPWALIAIAIVAVLLVVTCCFCVCKKCLFKKKNKKKGKEKGGKNAINMKDVKDLGKTMKDQALKDDDAETGLTDGEEKEEPKEEEKLGKLQYSLDYDFQNNQLLVGIIQAAELPALDMGGTSDPYVKVFLLPDKKKKFETKVHRKTLNPVFNEQFTFKVPYSELGGKTLVMAVYDFDRFSKHDIIGEFKVPMNTVDFGHVTEEWRDLQSAEKEEQEKLGDICFSLRYVPTAGKLTVVILEAKNLKKMDVGGLSDPYVKIHLMQNGKRLKKKKTTIKKNTLNPYYNESFSFEVPFEQIQKVQVVVTVLDYDKIGKNDAIGKVFVGYNSTGAELRHWSDMLANPRRPIAQWHTLQVEEEVDAMLAVKK.

Topologically, residues 1–57 are vesicular; sequence MVSASRPEALAAPVTTVATLVPHNATEPASPGEGKEDAFSKLKQKFMNELHKIPLPP. N-linked (GlcNAc...) asparagine glycosylation occurs at Asn-24. The chain crosses the membrane as a helical span at residues 58 to 79; the sequence is WALIAIAIVAVLLVVTCCFCVC. S-palmitoyl cysteine attachment occurs at residues Cys-74, Cys-75, Cys-77, Cys-79, and Cys-82. Residues 80-421 lie on the Cytoplasmic side of the membrane; sequence KKCLFKKKNK…EVDAMLAVKK (342 aa). A disordered region spans residues 112–141; the sequence is TMKDQALKDDDAETGLTDGEEKEEPKEEEK. Residues 121 to 133 show a composition bias toward acidic residues; that stretch reads DDAETGLTDGEEK. Residue Thr-128 is modified to Phosphothreonine. The interval 135–381 is phospholipid binding; that stretch reads EPKEEEKLGK…AIGKVFVGYN (247 aa). Residues 141 to 260 form the C2 1 domain; sequence KLGKLQYSLD…DFGHVTEEWR (120 aa). Residues Leu-171, Asp-172, and Asp-178 each coordinate Ca(2+). Tyr-229 is subject to Phosphotyrosine. Ca(2+)-binding residues include Asp-230, Phe-231, Asp-232, Ser-235, Lys-236, and Asp-238. Ser-264 carries the post-translational modification Phosphoserine. Residues 272–405 form the C2 2 domain; that stretch reads KLGDICFSLR…NPRRPIAQWH (134 aa). 2 residues coordinate Ca(2+): Asp-303 and Asp-309. A phosphoserine mark is found at Ser-342 and Ser-344. Ca(2+) contacts are provided by Asp-363, Asp-365, and Asp-371.

Belongs to the synaptotagmin family. In terms of assembly, homotetramer. Heterodimer; heterodimerizes with SYT2 in presence of calcium. Interacts with SCAMP5. Interacts with STON2. Forms a complex with SV2B, syntaxin 1 and SNAP25. Interacts with SV2A, SV2B and SV2C. Interacts with RIMS1. Interacts with PRRT2. Interacts with DNAJC5 in a phosphorylation-dependent manner. Interacts (via N-terminus) with RAB3A. Interacts with SYT12. Interacts with calmodulin. Interacts with DNM1 (via C-terminal proline-rich domain (PRD)); this interaction facilitates vesicle fission during clathrin-mediated endocytosis (CME). Requires Ca(2+) as cofactor. In terms of processing, glycosylated. Expressed in the brain and adrenal medulla (at protein level).

The protein localises to the cytoplasmic vesicle. It localises to the secretory vesicle membrane. The protein resides in the secretory vesicle. It is found in the synaptic vesicle membrane. Its subcellular location is the chromaffin granule membrane. The protein localises to the cytoplasm. Calcium sensor that participates in triggering neurotransmitter release at the synapse. May have a regulatory role in the membrane interactions during trafficking of synaptic vesicles at the active zone of the synapse. It binds acidic phospholipids with a specificity that requires the presence of both an acidic head group and a diacyl backbone. A Ca(2+)-dependent interaction between synaptotagmin and putative receptors for activated protein kinase C has also been reported. It can bind to at least three additional proteins in a Ca(2+)-independent manner; these are neurexins, syntaxin and AP2. Plays a role in dendrite formation by melanocytes. In Mus musculus (Mouse), this protein is Synaptotagmin-1.